A 180-amino-acid chain; its full sequence is MDNHGILESLLFTAGDEGLDEKQLLEILDMSKNQLVELIENYSSHGLMIQRFGTTYVLTTKKEAATYIEQLIEQKSQMKLSQAAMEVLSIIAYNQPLSRSDIELIRSINSDGAVKTLIAKGLVEAKVVNEQRSQQLITTDLFLNVFGISNIEDLPTTEEDDEEMDAFFSNLVNQKGENND.

The protein belongs to the ScpB family. Homodimer. Homodimerization may be required to stabilize the binding of ScpA to the Smc head domains. Component of a cohesin-like complex composed of ScpA, ScpB and the Smc homodimer, in which ScpA and ScpB bind to the head domain of Smc. The presence of the three proteins is required for the association of the complex with DNA.

The protein resides in the cytoplasm. Its function is as follows. Participates in chromosomal partition during cell division. May act via the formation of a condensin-like complex containing Smc and ScpA that pull DNA away from mid-cell into both cell halves. The polypeptide is Segregation and condensation protein B (Staphylococcus aureus (strain MSSA476)).